The chain runs to 140 residues: Large ribosomal subunit protein bL17 (140 aa).

This sequence belongs to the bacterial ribosomal protein bL17 family. As to quaternary structure, part of the 50S ribosomal subunit. Contacts protein L32.

In Ruegeria pomeroyi (strain ATCC 700808 / DSM 15171 / DSS-3) (Silicibacter pomeroyi), this protein is Large ribosomal subunit protein bL17.